The following is a 100-amino-acid chain: CCAAT/enhancer-binding protein homolog 2 (100 aa).

Disordered regions lie at residues 1 to 60 (MSGN…ETLE) and 79 to 100 (AYAK…SSAV). Residues 17-80 (EDDYSTKRKR…SFLKEMFMAY (64 aa)) enclose the bZIP domain. Residues 23–48 (KRKRNNEAVNRTRQKKRQEENDTAEK) are basic motif. Residues 24 to 83 (RKRNNEAVNRTRQKKRQEENDTAEKVDELKKENETLERKVEQLQKELSFLKEMFMAYAKN) are a coiled coil. The segment covering 39–60 (RQEENDTAEKVDELKKENETLE) has biased composition (basic and acidic residues). Residues 52 to 73 (LKKENETLERKVEQLQKELSFL) are leucine-zipper. Pro residues predominate over residues 88–100 (GPPPPPPPSSSAV).

Belongs to the bZIP family. C/EBP subfamily. As to quaternary structure, interacts with transcription factor zip-11. Expressed broadly in somatic tissues including the intestine.

Its subcellular location is the nucleus. In terms of biological role, transcription factor that binds to the promoter and the enhancer regions of target genes. Regulates expression of genes involved in fat metabolism, including ech-1.1 and fat-5. Has a protective role in response to infection by the Gram-negative bacterium P.aeruginosa. Required for the activation of infection response gene irg-1 following P.aeruginosa infection. Required to prevent P.aeruginosa ToxA-mediated lethality. May also function in concert with transcription factor zip-11 to mediate immune responses, independently of the pmk-1/p38 MAPK pathway. May act together with the bZIP transcription factor, zip-2. This chain is CCAAT/enhancer-binding protein homolog 2, found in Caenorhabditis elegans.